Here is a 444-residue protein sequence, read N- to C-terminus: N-succinylarginine dihydrolase (444 aa).

Substrate is bound by residues 19-28 (AGLSFGNVAS), Asn110, and 137-138 (HR). Glu174 is an active-site residue. Arg214 serves as a coordination point for substrate. The active site involves His250. Residues Asp252 and Asn362 each contribute to the substrate site. Cys368 acts as the Nucleophile in catalysis.

The protein belongs to the succinylarginine dihydrolase family. In terms of assembly, homodimer.

It carries out the reaction N(2)-succinyl-L-arginine + 2 H2O + 2 H(+) = N(2)-succinyl-L-ornithine + 2 NH4(+) + CO2. The protein operates within amino-acid degradation; L-arginine degradation via AST pathway; L-glutamate and succinate from L-arginine: step 2/5. In terms of biological role, catalyzes the hydrolysis of N(2)-succinylarginine into N(2)-succinylornithine, ammonia and CO(2). This Shewanella baltica (strain OS185) protein is N-succinylarginine dihydrolase.